Reading from the N-terminus, the 250-residue chain is Agamous-like MADS-box protein AGL8 homolog (250 aa).

Residues 3–57 (RGRVQLKRIENKINRQVTFSKRRSGLLKKAHEISVLCDAEVGLIVFSTKGKLFEY) enclose the MADS-box domain. The 91-residue stretch at 88-178 (PGSWTLEHAK…SKKVKEREKE (91 aa)) folds into the K-box domain.

Abundant in vegetative organs.

The protein localises to the nucleus. Its function is as follows. Probable transcription factor. This Solanum tuberosum (Potato) protein is Agamous-like MADS-box protein AGL8 homolog.